The primary structure comprises 243 residues: MILEVLMSQSVTIKSNKYGINLILDADMPFADLIKAVVEKFKASANFFKNAKLAISFEGRHLSDEEQQQIIAAIEENTTIEILCIVESGTEQEAIMKEQVEAFNEAVQKQCENVATVSVPEQFYRGTLRSGQVITSESSVTIIGDVNPGAKIIAQGNIVILGALKGNVHAGCTGDRSCFVFALDMQPIQIQIGDLIAKSPDEPQPKHRVRRKEKPAQEQAQIAIAKDGYIYIEPITKNILNSI.

The protein belongs to the MinC family. In terms of assembly, interacts with MinD and FtsZ.

Functionally, cell division inhibitor that blocks the formation of polar Z ring septums. Rapidly oscillates between the poles of the cell to destabilize FtsZ filaments that have formed before they mature into polar Z rings. Prevents FtsZ polymerization. This chain is Probable septum site-determining protein MinC, found in Agathobacter rectalis (strain ATCC 33656 / DSM 3377 / JCM 17463 / KCTC 5835 / VPI 0990) (Eubacterium rectale).